The sequence spans 713 residues: Cadherin-13 (713 aa).

A signal peptide spans 1–22 (MQPRTPLVLCVLLSQVLLLTSA). A propeptide spanning residues 23–138 (EDLDCIPGFQ…RTSPVPRQKR (116 aa)) is cleaved from the precursor. 2 N-linked (GlcNAc...) asparagine glycosylation sites follow: N52 and N86. Cadherin domains follow at residues 139–245 (SIVV…RPIF), 246–363 (REGP…SPKF), 364–477 (TKKE…GPVF), 478–585 (YPDP…APFI), and 584–690 (FIYP…VDSN). N-linked (GlcNAc...) asparagine glycosylation is found at N382, N489, N500, N530, N598, N638, and N671. A lipid anchor (GPI-anchor amidated asparagine) is attached at N690. A propeptide spans 691 to 713 (AVGALRFSLPSLLLLSLFSLACL) (removed in mature form).

In terms of assembly, by contrast to classical cadherins, homodimerization in trans is not mediated by cadherin EC1 domain strand-swapping, but instead through a homophilic adhesive interface which joins two elongated EC1-EC2 domains through a region near their Ca2+-binding sites to form a tetrahedral, X-like shape.

The protein resides in the cell membrane. Its subcellular location is the cytoplasm. Its function is as follows. Cadherins are calcium-dependent cell adhesion proteins. They preferentially interact with themselves in a homophilic manner in connecting cells; cadherins may thus contribute to the sorting of heterogeneous cell types. May act as a negative regulator of neural cell growth. The polypeptide is Cadherin-13 (CDH13) (Pongo abelii (Sumatran orangutan)).